We begin with the raw amino-acid sequence, 164 residues long: UPF0114 protein BCI_0033 (164 aa).

3 consecutive transmembrane segments (helical) span residues 15–35 (LLFP…LKFF), 53–73 (LILI…LVMV), and 136–156 (IMWC…MAYI).

Belongs to the UPF0114 family.

The protein localises to the cell membrane. The sequence is that of UPF0114 protein BCI_0033 from Baumannia cicadellinicola subsp. Homalodisca coagulata.